The chain runs to 43 residues: Protein PsbN (43 aa).

A helical transmembrane segment spans residues 5-27 (TLIAISISGLIVSFTGYALYTAF).

Belongs to the PsbN family.

Its subcellular location is the plastid. The protein resides in the chloroplast thylakoid membrane. Functionally, may play a role in photosystem I and II biogenesis. The sequence is that of Protein PsbN from Cicer arietinum (Chickpea).